We begin with the raw amino-acid sequence, 667 residues long: tRNA 5-methylaminomethyl-2-thiouridine biosynthesis bifunctional protein MnmC (667 aa).

The segment at 1-241 (MHKLTFAQLS…KREMLCGEKA (241 aa)) is tRNA (mnm(5)s(2)U34)-methyltransferase. Positions 268-667 (VGGGIASLFV…RKWLKGSKVV (400 aa)) are FAD-dependent cmnm(5)s(2)U34 oxidoreductase.

This sequence in the N-terminal section; belongs to the methyltransferase superfamily. tRNA (mnm(5)s(2)U34)-methyltransferase family. It in the C-terminal section; belongs to the DAO family. Requires FAD as cofactor.

It is found in the cytoplasm. The catalysed reaction is 5-aminomethyl-2-thiouridine(34) in tRNA + S-adenosyl-L-methionine = 5-methylaminomethyl-2-thiouridine(34) in tRNA + S-adenosyl-L-homocysteine + H(+). In terms of biological role, catalyzes the last two steps in the biosynthesis of 5-methylaminomethyl-2-thiouridine (mnm(5)s(2)U) at the wobble position (U34) in tRNA. Catalyzes the FAD-dependent demodification of cmnm(5)s(2)U34 to nm(5)s(2)U34, followed by the transfer of a methyl group from S-adenosyl-L-methionine to nm(5)s(2)U34, to form mnm(5)s(2)U34. The chain is tRNA 5-methylaminomethyl-2-thiouridine biosynthesis bifunctional protein MnmC from Haemophilus ducreyi (strain 35000HP / ATCC 700724).